The sequence spans 86 residues: MAVRIRLKRFGAKKRPFYRIVVADSRSPRDGRFIDEIGYYNPIAQPAEIKIDVEKAKKWLSVGAQPSDTVKSLFKKEGIIGNSVSQ.

Belongs to the bacterial ribosomal protein bS16 family.

The chain is Small ribosomal subunit protein bS16 from Thermoanaerobacter sp. (strain X514).